The sequence spans 518 residues: ESX-3 secretion system ATPase EccB3 (518 aa).

The interval 1 to 26 (MTGPVNPDDRRSFSSRTPVNENPDGV) is disordered. A helical membrane pass occupies residues 71-91 (VLTGALILVTGLVGCFIFSLF).

This sequence belongs to the EccB family. In terms of assembly, part of the ESX-3 / type VII secretion system (T7SS), which is composed of cytosolic and membrane components. The ESX-3 membrane complex is composed of EccB3, EccC3, EccD3 and EccE3.

It localises to the cell inner membrane. In terms of biological role, an ATPase. Part of the ESX-3 specialized secretion system, which is required for siderophore-mediated iron acquisition and for the secretion of EsxH and EsxG. The chain is ESX-3 secretion system ATPase EccB3 from Mycolicibacterium smegmatis (strain ATCC 700084 / mc(2)155) (Mycobacterium smegmatis).